Reading from the N-terminus, the 150-residue chain is Large ribosomal subunit protein uL13 (150 aa).

The protein belongs to the universal ribosomal protein uL13 family. As to quaternary structure, part of the 50S ribosomal subunit.

In terms of biological role, this protein is one of the early assembly proteins of the 50S ribosomal subunit, although it is not seen to bind rRNA by itself. It is important during the early stages of 50S assembly. The polypeptide is Large ribosomal subunit protein uL13 (Chlamydia caviae (strain ATCC VR-813 / DSM 19441 / 03DC25 / GPIC) (Chlamydophila caviae)).